The primary structure comprises 489 residues: Virion host shutoff protein (489 aa).

Disordered stretches follow at residues 110–135, 142–161, 285–319, and 332–364; these read EEAS…AFSN, SLAS…PSAA, RSQT…ETRV, and GYED…LTPP. Polar residues predominate over residues 124-134; the sequence is ITDSRPSSAFS.

Belongs to the herpesviridae VHS protein family. Interacts with human EIF4H, EIF4A1 and EIF4A2; interaction with eIF4AI and EIF4A2 presumably allows Vhs protein to associate with the eIF4F cap-binding complex.

Its subcellular location is the virion. Minor structural protein that acts as an endoribonuclease during lytic infection. Degrades host mRNAs in the cytoplasm by cutting them at preferred sites, including some in regions of translation initiation. Together with inhibition of host splicing by ICP27, contributes to an overall decrease in host protein synthesis. Also, after the onset of viral transcription, accelerates the turnover of viral mRNA, thereby facilitating the sequential expression of different classes of viral genes. Binds translation initiation factors eIF4H, eIF4AI, and eIF4AII, thereby may interact directly with the translation initiation complex and thus digest specifically mRNAs. Also impedes antigen presentation by major histocompatibility complex class I and class II molecules, inhibits secretion of cytokines that would otherwise recruit lymphocytes and neutrophils cells to the site of infection and blocks the activation of dendritic cells. Plays a role in the inhibition of interferon-beta activation by the cGAS/STING pathway. Mechanistically, down-regulates the expression of host cGAS/MB21D1. Also decreases the accumulation of other interferon-induced mRNAs such as host IFIT3 or CH25H to subvert their antiviral activity. The polypeptide is Virion host shutoff protein (UL41) (Human herpesvirus 1 (strain 17) (HHV-1)).